Here is a 266-residue protein sequence, read N- to C-terminus: Large ribosomal subunit protein eL8 (266 aa).

Residues K11, K20, and K21 each participate in a glycyl lysine isopeptide (Lys-Gly) (interchain with G-Cter in SUMO2) cross-link. K34 carries the N6-acetyllysine modification. K48 is covalently cross-linked (Glycyl lysine isopeptide (Lys-Gly) (interchain with G-Cter in SUMO2)). K97 is subject to N6-acetyllysine; alternate. Residue K97 forms a Glycyl lysine isopeptide (Lys-Gly) (interchain with G-Cter in SUMO2); alternate linkage. A Glycyl lysine isopeptide (Lys-Gly) (interchain with G-Cter in SUMO2) cross-link involves residue K125. Residue K217 is modified to N6-acetyllysine. K245 participates in a covalent cross-link: Glycyl lysine isopeptide (Lys-Gly) (interchain with G-Cter in SUMO2).

This sequence belongs to the eukaryotic ribosomal protein eL8 family. In terms of assembly, component of the large ribosomal subunit. Interacts with CRY1. Interacts with DICER1, AGO2, TARBP2, MOV10 and EIF6; they form a large RNA-induced silencing complex (RISC).

It localises to the cytoplasm. Its function is as follows. Component of the large ribosomal subunit. The ribosome is a large ribonucleoprotein complex responsible for the synthesis of proteins in the cell. The protein is Large ribosomal subunit protein eL8 (Rpl7a) of Mus musculus (Mouse).